The following is a 221-amino-acid chain: Interleukin-12 subunit alpha (221 aa).

The first 25 residues, 1-25 (MCPLRSLLLISTLVLLHHLPHLSLG), serve as a signal peptide directing secretion. Intrachain disulfides connect C39-C112, C66-C198, and C87-C125. N-linked (GlcNAc...) asparagine glycosylation is present at N95.

Belongs to the IL-6 superfamily. Heterodimer with IL12B; disulfide-linked. This heterodimer is known as interleukin IL-12. Heterodimer with EBI3/IL27B; not disulfide-linked. This heterodimer is known as interleukin IL-35. Interacts with NBR1; this interaction promotes IL-12 secretion.

The protein localises to the secreted. Functionally, heterodimerizes with IL12B to form the IL-12 cytokine or with EBI3/IL27B to form the IL-35 cytokine. IL-12 is primarily produced by professional antigen-presenting cells (APCs) such as B-cells and dendritic cells (DCs) as well as macrophages and granulocytes and regulates T-cell and natural killer-cell responses, induces the production of interferon-gamma (IFN-gamma), favors the differentiation of T-helper 1 (Th1) cells and is an important link between innate resistance and adaptive immunity. Mechanistically, exerts its biological effects through a receptor composed of IL12R1 and IL12R2 subunits. Binding to the receptor results in the rapid tyrosine phosphorylation of a number of cellular substrates including the JAK family kinases TYK2 and JAK2. In turn, recruited STAT4 gets phosphorylated and translocates to the nucleus where it regulates cytokine/growth factor responsive genes. As part of IL-35, plays essential roles in maintaining the immune homeostasis of the liver microenvironment and also functions as an immune-suppressive cytokine. Mediates biological events through unconventional receptors composed of IL12RB2 and gp130/IL6ST heterodimers or homodimers. Signaling requires the transcription factors STAT1 and STAT4, which form a unique heterodimer that binds to distinct DNA sites. In Ovis aries (Sheep), this protein is Interleukin-12 subunit alpha (IL12A).